We begin with the raw amino-acid sequence, 576 residues long: Potassium-transporting ATPase potassium-binding subunit (576 aa).

Transmembrane regions (helical) follow at residues 4–24 (QAWI…WPLG), 65–85 (AYAL…YALQ), 136–156 (ALGV…FALI), 179–199 (VYVL…QGVI), 257–277 (LSNF…VFAF), 288–308 (GALL…VTSL), 341–361 (FGIA…CGAV), 371–391 (LGGA…GGVG), 393–413 (GLYG…LMIG), 430–450 (MTAV…AVAL), 497–517 (LLLA…VLAI), and 540–560 (LFVV…YVPA).

The protein belongs to the KdpA family. As to quaternary structure, the system is composed of three essential subunits: KdpA, KdpB and KdpC.

The protein localises to the cell inner membrane. In terms of biological role, part of the high-affinity ATP-driven potassium transport (or Kdp) system, which catalyzes the hydrolysis of ATP coupled with the electrogenic transport of potassium into the cytoplasm. This subunit binds the periplasmic potassium ions and delivers the ions to the membrane domain of KdpB through an intramembrane tunnel. The chain is Potassium-transporting ATPase potassium-binding subunit from Methylibium petroleiphilum (strain ATCC BAA-1232 / LMG 22953 / PM1).